A 128-amino-acid polypeptide reads, in one-letter code: Small ribosomal subunit protein uS9 (128 aa).

The interval 106-128 is disordered; sequence PRVVERKKPGRPKARKRFQFSKR. Residues 113–128 are compositionally biased toward basic residues; that stretch reads KPGRPKARKRFQFSKR.

It belongs to the universal ribosomal protein uS9 family.

This is Small ribosomal subunit protein uS9 from Porphyromonas gingivalis (strain ATCC 33277 / DSM 20709 / CIP 103683 / JCM 12257 / NCTC 11834 / 2561).